The following is a 1098-amino-acid chain: Tudor domain-containing protein 7 (1098 aa).

In terms of domain architecture, HTH OST-type 1 spans 3 to 76 (EGDLVSKMLR…SGEITCYAMA (74 aa)). The interval 129 to 156 (ASNFSVGKKPNPAPLRDKGNSVGVKPDA) is disordered. The region spanning 233 to 302 (KMDEVQNRIK…GQDLLLYPAK (70 aa)) is the HTH OST-type 2 domain. Phosphoserine is present on S319. An HTH OST-type 3 domain is found at 337 to 406 (MAGDFKEKVA…PQKAILYAKL (70 aa)). Tudor domains are found at residues 513–570 (AVNV…FCSL) and 703–760 (LPFC…FLQE). Positions 855 to 874 (SGADSPNSKNGNMPMSGNTG) are disordered. S859 bears the Phosphoserine mark. An interaction with CDK17 region spans residues 861–1098 (NSKNGNMPMS…EYLIELSKVN (238 aa)). An interaction with CABLES1 region spans residues 893–1098 (TSAFSTEELP…EYLIELSKVN (206 aa)).

Belongs to the TDRD7 family. In terms of assembly, found in a mRNP complex, at least composed of TDRD1, TDRD6, TDRD7 and DDX4. Found in a complex containing CABLES1, CDK16 and CDK17. Interacts with CABLES1, CDK17 and PIWIL1.

It is found in the cytoplasm. Its function is as follows. Component of specific cytoplasmic RNA granules involved in post-transcriptional regulation of specific genes: probably acts by binding to specific mRNAs and regulating their translation. Required for lens transparency during lens development, by regulating translation of genes such as CRYBB3 and HSPB1 in the developing lens. Also required during spermatogenesis. The polypeptide is Tudor domain-containing protein 7 (TDRD7) (Homo sapiens (Human)).